We begin with the raw amino-acid sequence, 95 residues long: Protein TusB (95 aa).

Belongs to the DsrH/TusB family. In terms of assembly, heterohexamer, formed by a dimer of trimers. The hexameric TusBCD complex contains 2 copies each of TusB, TusC and TusD. The TusBCD complex interacts with TusE.

The protein localises to the cytoplasm. Functionally, part of a sulfur-relay system required for 2-thiolation of 5-methylaminomethyl-2-thiouridine (mnm(5)s(2)U) at tRNA wobble positions. This is Protein TusB from Sodalis glossinidius (strain morsitans).